A 326-amino-acid polypeptide reads, in one-letter code: Aspartate carbamoyltransferase catalytic subunit (326 aa).

2 residues coordinate carbamoyl phosphate: arginine 60 and threonine 61. Lysine 88 contributes to the L-aspartate binding site. Carbamoyl phosphate-binding residues include arginine 110, histidine 143, and glutamine 146. Positions 183 and 239 each coordinate L-aspartate. 2 residues coordinate carbamoyl phosphate: glycine 280 and proline 281.

The protein belongs to the aspartate/ornithine carbamoyltransferase superfamily. ATCase family. As to quaternary structure, heterododecamer (2C3:3R2) of six catalytic PyrB chains organized as two trimers (C3), and six regulatory PyrI chains organized as three dimers (R2).

It catalyses the reaction carbamoyl phosphate + L-aspartate = N-carbamoyl-L-aspartate + phosphate + H(+). Its pathway is pyrimidine metabolism; UMP biosynthesis via de novo pathway; (S)-dihydroorotate from bicarbonate: step 2/3. Functionally, catalyzes the condensation of carbamoyl phosphate and aspartate to form carbamoyl aspartate and inorganic phosphate, the committed step in the de novo pyrimidine nucleotide biosynthesis pathway. This is Aspartate carbamoyltransferase catalytic subunit from Microcystis aeruginosa (strain NIES-843 / IAM M-2473).